Consider the following 394-residue polypeptide: Ceramide glucosyltransferase (394 aa).

The Lumenal portion of the chain corresponds to methionine 1 to glycine 10. Residues leucine 11–tyrosine 32 form a helical membrane-spanning segment. Topologically, residues threonine 33–arginine 195 are cytoplasmic. A short sequence motif (D1) is located at residue aspartate 92. Aspartate 144 is a short sequence motif (D2). A helical membrane pass occupies residues serine 196–methionine 215. Over arginine 216–threonine 287 the chain is Lumenal. Aspartate 236 is a short sequence motif (D3). Aspartate 236 functions as the Proton acceptor in the catalytic mechanism. The short motif at arginine 272–tryptophan 276 is the (Q/R)XXRW element. The helical transmembrane segment at isoleucine 288 to glycine 304 threads the bilayer. At tryptophan 305–histidine 309 the chain is on the cytoplasmic side. The helical transmembrane segment at isoleucine 310–isoleucine 328 threads the bilayer. At phenylalanine 329 to aspartate 348 the chain is on the lumenal side. Residues tyrosine 349–tryptophan 369 form a helical membrane-spanning segment. Residues aspartate 370–valine 394 lie on the Cytoplasmic side of the membrane.

Belongs to the glycosyltransferase 2 family.

Its subcellular location is the golgi apparatus membrane. The enzyme catalyses an N-acylsphing-4-enine + UDP-alpha-D-glucose = a beta-D-glucosyl-(1&lt;-&gt;1')-N-acylsphing-4-enine + UDP + H(+). It carries out the reaction UDP-alpha-D-xylose + an N-acylsphing-4-enine = a beta-D-xylosyl-(1&lt;-&gt;1')-N-acylsphing-4-enine + UDP + H(+). It catalyses the reaction N-(9Z-octadecenoyl)-sphing-4-enine + UDP-alpha-D-xylose = beta-D-xylosyl-(1&lt;-&gt;1')-N-(9Z-octadecenoyl)-sphing-4-enine + UDP + H(+). The protein operates within lipid metabolism; sphingolipid metabolism. Participates in the initial step of the glucosylceramide-based glycosphingolipid/GSL synthetic pathway at the cytosolic surface of the Golgi. Catalyzes the transfer of glucose from UDP-glucose to ceramide to produce glucosylceramide/GlcCer (such as beta-D-glucosyl-(1&lt;-&gt;1')-N-acylsphing-4-enine). Glucosylceramide is the core component of glycosphingolipids/GSLs, amphipathic molecules consisting of a ceramide lipid moiety embedded in the outer leaflet of the membrane, linked to one of hundreds of different externally oriented oligosaccharide structures. Glycosphingolipids are essential components of membrane microdomains that mediate membrane trafficking and signal transduction. They are implicated in many fundamental cellular processes, including growth, differentiation, migration, morphogenesis, cell-to-cell and cell-to-matrix interactions. Catalyzes the synthesis of xylosylceramide/XylCer (such as beta-D-xylosyl-(1&lt;-&gt;1')-N-acylsphing-4-enine) using UDP-Xyl as xylose donor. This Xenopus tropicalis (Western clawed frog) protein is Ceramide glucosyltransferase (ugcg).